A 473-amino-acid chain; its full sequence is Argininosuccinate lyase (473 aa).

The protein belongs to the lyase 1 family. Argininosuccinate lyase subfamily.

Its subcellular location is the cytoplasm. The enzyme catalyses 2-(N(omega)-L-arginino)succinate = fumarate + L-arginine. The protein operates within amino-acid biosynthesis; L-arginine biosynthesis; L-arginine from L-ornithine and carbamoyl phosphate: step 3/3. This is Argininosuccinate lyase from Nocardia farcinica (strain IFM 10152).